A 263-amino-acid chain; its full sequence is Ribosomal RNA small subunit methyltransferase A (263 aa).

Residues His-13, Leu-15, Gly-40, Glu-61, Asp-86, and Asn-105 each contribute to the S-adenosyl-L-methionine site.

Belongs to the class I-like SAM-binding methyltransferase superfamily. rRNA adenine N(6)-methyltransferase family. RsmA subfamily.

It localises to the cytoplasm. It carries out the reaction adenosine(1518)/adenosine(1519) in 16S rRNA + 4 S-adenosyl-L-methionine = N(6)-dimethyladenosine(1518)/N(6)-dimethyladenosine(1519) in 16S rRNA + 4 S-adenosyl-L-homocysteine + 4 H(+). In terms of biological role, specifically dimethylates two adjacent adenosines (A1518 and A1519) in the loop of a conserved hairpin near the 3'-end of 16S rRNA in the 30S particle. May play a critical role in biogenesis of 30S subunits. The chain is Ribosomal RNA small subunit methyltransferase A from Dichelobacter nodosus (strain VCS1703A).